We begin with the raw amino-acid sequence, 370 residues long: GTPase Obg (370 aa).

In terms of domain architecture, Obg spans 1 to 159 (MKFVDEAYID…KKLKLELRVL (159 aa)). Residues 160-333 (ADVGLLGMPN…LVQAIYQHVA (174 aa)) enclose the OBG-type G domain. Residues 166–173 (GMPNAGKS), 191–195 (FTTLH), 213–216 (DVPG), 283–286 (NKLD), and 314–316 (SAL) contribute to the GTP site. The Mg(2+) site is built by serine 173 and threonine 193. The interval 346–370 (FAEPEADESDDEPRFAPQADDPRFR) is disordered.

The protein belongs to the TRAFAC class OBG-HflX-like GTPase superfamily. OBG GTPase family. Monomer. It depends on Mg(2+) as a cofactor.

The protein resides in the cytoplasm. Functionally, an essential GTPase which binds GTP, GDP and possibly (p)ppGpp with moderate affinity, with high nucleotide exchange rates and a fairly low GTP hydrolysis rate. Plays a role in control of the cell cycle, stress response, ribosome biogenesis and in those bacteria that undergo differentiation, in morphogenesis control. This chain is GTPase Obg, found in Methylibium petroleiphilum (strain ATCC BAA-1232 / LMG 22953 / PM1).